The chain runs to 83 residues: Large ribosomal subunit protein bL27c (83 aa).

The interval 1–24 (MAHKKGAGSTKNGRDSNAKRLGVK) is disordered.

This sequence belongs to the bacterial ribosomal protein bL27 family.

It localises to the plastid. Its subcellular location is the chloroplast. The sequence is that of Large ribosomal subunit protein bL27c (rpl27) from Trieres chinensis (Marine centric diatom).